Reading from the N-terminus, the 271-residue chain is Tryptophan synthase alpha chain (271 aa).

Active-site proton acceptor residues include E49 and D60.

This sequence belongs to the TrpA family. As to quaternary structure, tetramer of two alpha and two beta chains.

The enzyme catalyses (1S,2R)-1-C-(indol-3-yl)glycerol 3-phosphate + L-serine = D-glyceraldehyde 3-phosphate + L-tryptophan + H2O. It participates in amino-acid biosynthesis; L-tryptophan biosynthesis; L-tryptophan from chorismate: step 5/5. Its function is as follows. The alpha subunit is responsible for the aldol cleavage of indoleglycerol phosphate to indole and glyceraldehyde 3-phosphate. The sequence is that of Tryptophan synthase alpha chain from Paraburkholderia phymatum (strain DSM 17167 / CIP 108236 / LMG 21445 / STM815) (Burkholderia phymatum).